We begin with the raw amino-acid sequence, 444 residues long: Exodeoxyribonuclease 7 large subunit (444 aa).

It belongs to the XseA family. As to quaternary structure, heterooligomer composed of large and small subunits.

It localises to the cytoplasm. The enzyme catalyses Exonucleolytic cleavage in either 5'- to 3'- or 3'- to 5'-direction to yield nucleoside 5'-phosphates.. In terms of biological role, bidirectionally degrades single-stranded DNA into large acid-insoluble oligonucleotides, which are then degraded further into small acid-soluble oligonucleotides. This chain is Exodeoxyribonuclease 7 large subunit, found in Xylella fastidiosa (strain M23).